A 354-amino-acid polypeptide reads, in one-letter code: Transcription termination factor 3, mitochondrial (354 aa).

A mitochondrion-targeting transit peptide spans 1 to 89 (MFCSALRNIL…SFNLAAYVNN (89 aa)).

This sequence belongs to the mTERF family.

It is found in the mitochondrion. In terms of biological role, binds promoter DNA and regulates initiation of transcription. Regulator of mitochondrial ribosome biogenesis and translation that is essential for development. Required for normal mitochondrial transcription and translation. Required for assembly of mitochondrial respiratory complexes and normal mitochondrial function. Maintains 16S rRNA levels and functions in mitochondrial ribosome assembly by regulating the biogenesis of the 39S ribosomal subunit. This chain is Transcription termination factor 3, mitochondrial, found in Drosophila melanogaster (Fruit fly).